A 172-amino-acid chain; its full sequence is Adenine phosphoribosyltransferase (172 aa).

Belongs to the purine/pyrimidine phosphoribosyltransferase family. In terms of assembly, homodimer.

Its subcellular location is the cytoplasm. The catalysed reaction is AMP + diphosphate = 5-phospho-alpha-D-ribose 1-diphosphate + adenine. It participates in purine metabolism; AMP biosynthesis via salvage pathway; AMP from adenine: step 1/1. Catalyzes a salvage reaction resulting in the formation of AMP, that is energically less costly than de novo synthesis. The protein is Adenine phosphoribosyltransferase of Ligilactobacillus salivarius (strain UCC118) (Lactobacillus salivarius).